Here is a 489-residue protein sequence, read N- to C-terminus: ATF/CREB activator 1 (489 aa).

The bZIP domain maps to 384-447 (AWKRARLLER…QKMKKISRLH (64 aa)). A basic motif region spans residues 386–406 (KRARLLERNRIAASKCRQRKK). Residues 412-419 (LQREFDQI) are leucine-zipper.

It belongs to the bZIP family.

The protein localises to the nucleus. Transcriptional activator of promoters containing ATF/CREB sites. Can independently stimulate transcription through ATF/CREB sites. Important for a variety of biological functions including growth on non-optimal carbon sources. Regulates the expression of COS8. Has efficient silencing blocking activities. The protein is ATF/CREB activator 1 (ACA1) of Saccharomyces cerevisiae (strain ATCC 204508 / S288c) (Baker's yeast).